We begin with the raw amino-acid sequence, 405 residues long: Probable tRNA sulfurtransferase (405 aa).

Residues 60-165 (ETIDQRLKLV…QDAIYISNQL (106 aa)) form the THUMP domain. ATP is bound by residues 183–184 (ML), 208–209 (HF), arginine 265, glycine 287, and glutamine 296.

The protein belongs to the ThiI family.

It localises to the cytoplasm. It carries out the reaction [ThiI sulfur-carrier protein]-S-sulfanyl-L-cysteine + a uridine in tRNA + 2 reduced [2Fe-2S]-[ferredoxin] + ATP + H(+) = [ThiI sulfur-carrier protein]-L-cysteine + a 4-thiouridine in tRNA + 2 oxidized [2Fe-2S]-[ferredoxin] + AMP + diphosphate. The enzyme catalyses [ThiS sulfur-carrier protein]-C-terminal Gly-Gly-AMP + S-sulfanyl-L-cysteinyl-[cysteine desulfurase] + AH2 = [ThiS sulfur-carrier protein]-C-terminal-Gly-aminoethanethioate + L-cysteinyl-[cysteine desulfurase] + A + AMP + 2 H(+). It participates in cofactor biosynthesis; thiamine diphosphate biosynthesis. Functionally, catalyzes the ATP-dependent transfer of a sulfur to tRNA to produce 4-thiouridine in position 8 of tRNAs, which functions as a near-UV photosensor. Also catalyzes the transfer of sulfur to the sulfur carrier protein ThiS, forming ThiS-thiocarboxylate. This is a step in the synthesis of thiazole, in the thiamine biosynthesis pathway. The sulfur is donated as persulfide by IscS. This Lactobacillus johnsonii (strain CNCM I-12250 / La1 / NCC 533) protein is Probable tRNA sulfurtransferase.